Consider the following 262-residue polypeptide: Pyridoxine 5'-phosphate synthase (262 aa).

Asn6 contacts 3-amino-2-oxopropyl phosphate. 8-9 (DH) serves as a coordination point for 1-deoxy-D-xylulose 5-phosphate. Position 17 (Arg17) interacts with 3-amino-2-oxopropyl phosphate. His43 functions as the Proton acceptor in the catalytic mechanism. Positions 45 and 50 each coordinate 1-deoxy-D-xylulose 5-phosphate. Glu70 functions as the Proton acceptor in the catalytic mechanism. Thr102 is a 1-deoxy-D-xylulose 5-phosphate binding site. The Proton donor role is filled by His215. Residues Gly216 and 237-238 (GH) each bind 3-amino-2-oxopropyl phosphate.

It belongs to the PNP synthase family. As to quaternary structure, homooctamer; tetramer of dimers.

Its subcellular location is the cytoplasm. The enzyme catalyses 3-amino-2-oxopropyl phosphate + 1-deoxy-D-xylulose 5-phosphate = pyridoxine 5'-phosphate + phosphate + 2 H2O + H(+). Its pathway is cofactor biosynthesis; pyridoxine 5'-phosphate biosynthesis; pyridoxine 5'-phosphate from D-erythrose 4-phosphate: step 5/5. In terms of biological role, catalyzes the complicated ring closure reaction between the two acyclic compounds 1-deoxy-D-xylulose-5-phosphate (DXP) and 3-amino-2-oxopropyl phosphate (1-amino-acetone-3-phosphate or AAP) to form pyridoxine 5'-phosphate (PNP) and inorganic phosphate. This chain is Pyridoxine 5'-phosphate synthase, found in Helicobacter pylori (strain Shi470).